We begin with the raw amino-acid sequence, 215 residues long: ATP phosphoribosyltransferase (215 aa).

It belongs to the ATP phosphoribosyltransferase family. Short subfamily. Heteromultimer composed of HisG and HisZ subunits.

The protein localises to the cytoplasm. It carries out the reaction 1-(5-phospho-beta-D-ribosyl)-ATP + diphosphate = 5-phospho-alpha-D-ribose 1-diphosphate + ATP. It participates in amino-acid biosynthesis; L-histidine biosynthesis; L-histidine from 5-phospho-alpha-D-ribose 1-diphosphate: step 1/9. Functionally, catalyzes the condensation of ATP and 5-phosphoribose 1-diphosphate to form N'-(5'-phosphoribosyl)-ATP (PR-ATP). Has a crucial role in the pathway because the rate of histidine biosynthesis seems to be controlled primarily by regulation of HisG enzymatic activity. The protein is ATP phosphoribosyltransferase of Prochlorococcus marinus subsp. pastoris (strain CCMP1986 / NIES-2087 / MED4).